Here is a 1270-residue protein sequence, read N- to C-terminus: DNA-directed RNA polymerase subunit beta (1270 aa).

Belongs to the RNA polymerase beta chain family. In terms of assembly, the RNAP catalytic core consists of 2 alpha, 1 beta, 1 beta' and 1 omega subunit. When a sigma factor is associated with the core the holoenzyme is formed, which can initiate transcription.

The catalysed reaction is RNA(n) + a ribonucleoside 5'-triphosphate = RNA(n+1) + diphosphate. In terms of biological role, DNA-dependent RNA polymerase catalyzes the transcription of DNA into RNA using the four ribonucleoside triphosphates as substrates. The polypeptide is DNA-directed RNA polymerase subunit beta (Christiangramia forsetii (strain DSM 17595 / CGMCC 1.15422 / KT0803) (Gramella forsetii)).